Reading from the N-terminus, the 391-residue chain is Terminal nucleotidyltransferase 5C (391 aa).

The protein belongs to the TENT family. As to quaternary structure, interacts with BCCIP and PABPC1; the interaction has no effect on TENT5C poly(A) polymerase function. Interacts with PLK4; this interaction leads to the TENT5C recruitment into the centrosome.

It localises to the nucleus. The protein resides in the cytoplasm. It is found in the cytoskeleton. The protein localises to the microtubule organizing center. Its subcellular location is the centrosome. The enzyme catalyses RNA(n) + ATP = RNA(n)-3'-adenine ribonucleotide + diphosphate. In terms of biological role, catalyzes the transfer of one adenosine molecule from an ATP to an mRNA poly(A) tail bearing a 3'-OH terminal group and enhances mRNA stability and gene expression. Can also elongate RNA oligos ending with uridine molecule, provided that the sequence is adenosine-rich. Mainly targets mRNAs encoding endoplasmic reticulum-targeted protein. This chain is Terminal nucleotidyltransferase 5C, found in Macaca fascicularis (Crab-eating macaque).